We begin with the raw amino-acid sequence, 298 residues long: MTIIDGKQVSANLKQELKTAVEACRQKTDAVPGLTVIIVGEDPASQVYVRNKSKSCKEIGMNSTVIELPAETTEAELLAGIEALNNDNDVHGILVQQPLPAHIDDYAVTMAILPSKDVDGFHPENVGQMVLGNLDKCFISCTPYGILELFSRYSIETKGKHCVVIGRSNIVGKPMANLMLQKLKESNCTVTICHSATSNMPEITRQADIVIAAIGRPEYVTEDMIKPGAVVIDVGINRVEDPSRKSGYRLVGDVDYENVNKKASAITPVPGGVGPMTIAMLLKNTLQSFMRVHNIESA.

NADP(+)-binding positions include Gly-166–Ser-168, Ser-195, and Ile-236.

This sequence belongs to the tetrahydrofolate dehydrogenase/cyclohydrolase family. Homodimer.

The enzyme catalyses (6R)-5,10-methylene-5,6,7,8-tetrahydrofolate + NADP(+) = (6R)-5,10-methenyltetrahydrofolate + NADPH. It carries out the reaction (6R)-5,10-methenyltetrahydrofolate + H2O = (6R)-10-formyltetrahydrofolate + H(+). It participates in one-carbon metabolism; tetrahydrofolate interconversion. In terms of biological role, catalyzes the oxidation of 5,10-methylenetetrahydrofolate to 5,10-methenyltetrahydrofolate and then the hydrolysis of 5,10-methenyltetrahydrofolate to 10-formyltetrahydrofolate. The sequence is that of Bifunctional protein FolD from Chlorobium phaeobacteroides (strain BS1).